Reading from the N-terminus, the 183-residue chain is Inosine triphosphate pyrophosphatase (183 aa).

8 to 13 (TGNKNK) contributes to the ITP binding site. E36 contacts Mg(2+). ITP is bound by residues K48, 64-65 (DT), K81, 140-143 (FGWD), K161, and 166-167 (HR).

It belongs to the HAM1 NTPase family. Homodimer. Requires Mg(2+) as cofactor. Mn(2+) is required as a cofactor.

The protein localises to the cytoplasm. It localises to the nucleus. It catalyses the reaction ITP + H2O = IMP + diphosphate + H(+). The enzyme catalyses dITP + H2O = dIMP + diphosphate + H(+). The catalysed reaction is XTP + H2O = XMP + diphosphate + H(+). Pyrophosphatase that hydrolyzes non-canonical purine nucleotides such as inosine triphosphate (ITP), deoxyinosine triphosphate (dITP) or xanthosine 5'-triphosphate (XTP) to their respective monophosphate derivatives. The enzyme does not distinguish between the deoxy- and ribose forms. Probably excludes non-canonical purines from RNA and DNA precursor pools, thus preventing their incorporation into RNA and DNA and avoiding chromosomal lesions. The sequence is that of Inosine triphosphate pyrophosphatase from Emericella nidulans (strain FGSC A4 / ATCC 38163 / CBS 112.46 / NRRL 194 / M139) (Aspergillus nidulans).